Reading from the N-terminus, the 363-residue chain is 3-isopropylmalate dehydrogenase (363 aa).

78–91 (GKKWDTLPINERPE) is an NAD(+) binding site. Substrate is bound by residues Arg-99, Arg-109, Arg-138, and Asp-227. Positions 227, 251, and 255 each coordinate Mg(2+). 285–297 (GSAPDIQGKNIAN) contacts NAD(+).

Belongs to the isocitrate and isopropylmalate dehydrogenases family. LeuB type 1 subfamily. In terms of assembly, homodimer. The cofactor is Mg(2+). Mn(2+) serves as cofactor.

The protein resides in the cytoplasm. It catalyses the reaction (2R,3S)-3-isopropylmalate + NAD(+) = 4-methyl-2-oxopentanoate + CO2 + NADH. The protein operates within amino-acid biosynthesis; L-leucine biosynthesis; L-leucine from 3-methyl-2-oxobutanoate: step 3/4. In terms of biological role, catalyzes the oxidation of 3-carboxy-2-hydroxy-4-methylpentanoate (3-isopropylmalate) to 3-carboxy-4-methyl-2-oxopentanoate. The product decarboxylates to 4-methyl-2 oxopentanoate. The polypeptide is 3-isopropylmalate dehydrogenase (Buchnera aphidicola subsp. Diuraphis noxia).